The primary structure comprises 272 residues: MMACHC-like protein (272 aa).

Substrate contacts are provided by residues Asp-121, 132–135, and 146–148; these read ILMQ and YYQ.

The protein belongs to the MMACHC family. The cofactor is FAD. Requires FMN as cofactor.

The protein localises to the cytoplasm. Catalyzes the reductive dealkylation of cyanocobalamin to cob(II)alamin, using FAD or FMN as cofactor and NADPH as cosubstrate. Can also catalyze the glutathione-dependent reductive demethylation of methylcobalamin, and, with much lower efficiency, the glutathione-dependent reductive demethylation of adenosylcobalamin. Under anaerobic conditions cob(I)alamin is the first product; it is highly reactive and is converted to aquocob(II)alamin in the presence of oxygen. Binds cyanocobalamin, adenosylcobalamin, methylcobalamin and other, related vitamin B12 derivatives. The polypeptide is MMACHC-like protein (cblc-1) (Caenorhabditis elegans).